A 351-amino-acid chain; its full sequence is Ferredoxin--NADP reductase (351 aa).

7 residues coordinate FAD: D44, Q52, Y57, V97, F132, D296, and S337.

The protein belongs to the ferredoxin--NADP reductase type 2 family. As to quaternary structure, homodimer. Requires FAD as cofactor.

The enzyme catalyses 2 reduced [2Fe-2S]-[ferredoxin] + NADP(+) + H(+) = 2 oxidized [2Fe-2S]-[ferredoxin] + NADPH. This chain is Ferredoxin--NADP reductase, found in Paraburkholderia phymatum (strain DSM 17167 / CIP 108236 / LMG 21445 / STM815) (Burkholderia phymatum).